The following is a 297-amino-acid chain: 4-hydroxy-tetrahydrodipicolinate synthase (297 aa).

Threonine 45 lines the pyruvate pocket. The Proton donor/acceptor role is filled by tyrosine 133. Catalysis depends on lysine 161, which acts as the Schiff-base intermediate with substrate. Position 203 (isoleucine 203) interacts with pyruvate.

The protein belongs to the DapA family. Homotetramer; dimer of dimers.

It localises to the cytoplasm. It carries out the reaction L-aspartate 4-semialdehyde + pyruvate = (2S,4S)-4-hydroxy-2,3,4,5-tetrahydrodipicolinate + H2O + H(+). The protein operates within amino-acid biosynthesis; L-lysine biosynthesis via DAP pathway; (S)-tetrahydrodipicolinate from L-aspartate: step 3/4. Its function is as follows. Catalyzes the condensation of (S)-aspartate-beta-semialdehyde [(S)-ASA] and pyruvate to 4-hydroxy-tetrahydrodipicolinate (HTPA). The protein is 4-hydroxy-tetrahydrodipicolinate synthase of Buchnera aphidicola subsp. Cinara cedri (strain Cc).